A 930-amino-acid polypeptide reads, in one-letter code: MGGSCAQRRRAGPRQVLFPLLLPFFYPTLCEPIRYSIPEELAKGSVVGNLAKDLGLSVLDVSARKLRVSAEKLHFSVDAESGDLLVKNRIDREQICKERRRCELQLEAVVENPLNIFHVIVVIEDVNDHAPQFDKKEIHLEIFESASAGTRLSLDPATDPDININSIKDYKINSNPYFSLMVRVNSDGGKYPELSLEKLLDREEQRSHSLILTALDGGDPPRSATAHIEISVKDTNDNPPVFSRDEYRISLSENLPPGSPVLQVTATDQDEGVNAEINYYFRSTAQSTKHMFSLDEKTGMIKNNQSFDFEDVERYTMEVEAKDGGGLSTQCKVIIEILDENDNSPEIIITSLSDQILENSPPGMVVALFKTRDLDFGGNGEVRCNIETDIPFKIYSSSNHYYKLVTDGALDREQTPEYNVTIVATDRGKPPLSSSRSITLYVADINDNAPVFDQTSYVVHVAENNPPGASIAQVSASDPDLGLNGHISYSIVASDLEPLAVSSYVSVSAQSGVVFAQRAFDHEQLRAFALTLQARDHGSPTLSANVSLRVLVGDRNDNAPRVLYPALGPDGSAFFDMVPRSAEPGYLVTKVVAVDADSGHNAWLSYHVLQASEPGLFSLGLRTGEVRTARALGDRDAARQRLLVAVRDGGQPPLSATATLHLVFADNLQEILPDLSDRPVLSDPQAELQFYLVVALALISVLFLLAVILAIALRLRRSLSPTTWDCFHPGLCVKSGPVVPPNYSEGTLPYSYNLCIAHTGTKEFNFLKCSVPLHSNEDMVCSVSPGALIPPHGGEDLTSHPETLTSQAPPNTDWRFSQAQRPGTSGSQNGDDTGTWPNNQFDTEMLQAMILASASEAADGSSTLGGGAGTMGLSARYGPQFTLQHVPDYRQNVYIPGSNATLTNAAGKRDGKAPAGGNGNKKKSGKKEKK.

Positions 1 to 30 (MGGSCAQRRRAGPRQVLFPLLLPFFYPTLC) are cleaved as a signal peptide. Cadherin domains follow at residues 31-133 (EPIR…APQF), 134-242 (DKKE…PPVF), 243-347 (SRDE…SPEI), 348-452 (IITS…APVF), 453-562 (DQTS…APRV), and 570-675 (DGSA…LPDL). Topologically, residues 31 to 691 (EPIRYSIPEE…SDPQAELQFY (661 aa)) are extracellular. N304, N419, and N545 each carry an N-linked (GlcNAc...) asparagine glycan. The helical transmembrane segment at 692–712 (LVVALALISVLFLLAVILAIA) threads the bilayer. Topologically, residues 713–930 (LRLRRSLSPT…KKKSGKKEKK (218 aa)) are cytoplasmic. 2 disordered regions span residues 791 to 839 (PHGG…WPNN) and 900 to 930 (ATLT…KEKK). Over residues 800–839 (HPETLTSQAPPNTDWRFSQAQRPGTSGSQNGDDTGTWPNN) the composition is skewed to polar residues. Positions 920 to 930 (NKKKSGKKEKK) are enriched in basic residues.

It localises to the cell membrane. In terms of biological role, potential calcium-dependent cell-adhesion protein. May be involved in the establishment and maintenance of specific neuronal connections in the brain. The protein is Protocadherin gamma-B6 (PCDHGB6) of Pan troglodytes (Chimpanzee).